A 64-amino-acid chain; its full sequence is Large ribosomal subunit protein bL35 (64 aa).

Residues 18 to 39 (GSGLVKHYPSNKHHKNTHKKEN) are disordered. The segment covering 26–39 (PSNKHHKNTHKKEN) has biased composition (basic residues).

Belongs to the bacterial ribosomal protein bL35 family.

The chain is Large ribosomal subunit protein bL35 from Symbiobacterium thermophilum (strain DSM 24528 / JCM 14929 / IAM 14863 / T).